Here is a 610-residue protein sequence, read N- to C-terminus: Menin (610 aa).

The segment at 214–390 (GVAERSWLYL…SLLEAGEERP (177 aa)) is interaction with FANCD2. Residues 462–552 (AEAAEAEELW…SPPPEGPVLT (91 aa)) are disordered. Positions 484 to 500 (RRESKPEEPPPPKKPAL) are enriched in basic and acidic residues. Residues Ser487 and Ser543 each carry the phosphoserine modification. Pro residues predominate over residues 537-548 (APAPAASPPPEG). Phosphothreonine is present on Thr594.

Component of the MLL-HCF complex, at least composed of KMT2A/MLL1, MEN1, ASH2L, RBBP5, DPY30, WDR5, HCFC1 and HCFC2. Component of the menin-associated histone methyltransferase complex, at least composed of KMT2B/MLL4, MEN1, ASH2L, RBBP5, DPY30 and WDR5. Interacts with POLR2B. Interacts with POLR2A phosphorylated at 'Ser-5', but not with the unphosphorylated, nor 'Ser-2' phosphorylated POLR2A forms. Interacts with FANCD2 and DBF4. Interacts with SMAD3, but not with SMAD2, nor SMAD4. Directly interacts with NFKB1, NFKB2 and RELA. Interacts with JUND (via MBM motif); inhibits the interaction of JUND with MAPK10 and the phosphorylation of JUND by MAP kinases MAPK8 and MAPK10. Interacts with KMT2A (via MBM motif). The KMT2A-MEN1 complex interacts with PSIP1 with a greater affinity as MEN1 enhances interaction of KMT2A with PSIP1.

The protein localises to the nucleus. Its function is as follows. Essential component of a MLL/SET1 histone methyltransferase (HMT) complex, a complex that specifically methylates 'Lys-4' of histone H3 (H3K4). Functions as a transcriptional regulator. Binds to the TERT promoter and represses telomerase expression. Plays a role in TGFB1-mediated inhibition of cell-proliferation, possibly regulating SMAD3 transcriptional activity. Represses JUND-mediated transcriptional activation on AP1 sites, as well as that mediated by NFKB subunit RELA. Positively regulates HOXC8 and HOXC6 gene expression. May be involved in normal hematopoiesis through the activation of HOXA9 expression. May be involved in DNA repair. The polypeptide is Menin (MEN1) (Canis lupus familiaris (Dog)).